Reading from the N-terminus, the 341-residue chain is UDP-3-O-acylglucosamine N-acyltransferase (341 aa).

The Proton acceptor role is filled by His-255.

It belongs to the transferase hexapeptide repeat family. LpxD subfamily. Homotrimer.

It carries out the reaction a UDP-3-O-[(3R)-3-hydroxyacyl]-alpha-D-glucosamine + a (3R)-hydroxyacyl-[ACP] = a UDP-2-N,3-O-bis[(3R)-3-hydroxyacyl]-alpha-D-glucosamine + holo-[ACP] + H(+). Its pathway is bacterial outer membrane biogenesis; LPS lipid A biosynthesis. Functionally, catalyzes the N-acylation of UDP-3-O-acylglucosamine using 3-hydroxyacyl-ACP as the acyl donor. Is involved in the biosynthesis of lipid A, a phosphorylated glycolipid that anchors the lipopolysaccharide to the outer membrane of the cell. In Granulibacter bethesdensis (strain ATCC BAA-1260 / CGDNIH1), this protein is UDP-3-O-acylglucosamine N-acyltransferase.